Here is a 106-residue protein sequence, read N- to C-terminus: Glutaredoxin-1 (106 aa).

Position 2 is an N-acetylalanine (A2). The Glutaredoxin domain occupies 3 to 106; it reads QAFVNSKIQP…TRLKQMGALQ (104 aa). At K9 the chain carries N6-succinyllysine. Intrachain disulfides connect C23–C26 and C79–C83.

It belongs to the glutaredoxin family.

Its subcellular location is the cytoplasm. Functionally, has a glutathione-disulfide oxidoreductase activity in the presence of NADPH and glutathione reductase. Reduces low molecular weight disulfides and proteins. In Bos taurus (Bovine), this protein is Glutaredoxin-1 (GLRX).